Here is a 284-residue protein sequence, read N- to C-terminus: Shikimate dehydrogenase (NADP(+)) (284 aa).

Residues 19-21 (SFS) and Thr-66 contribute to the shikimate site. Lys-70 (proton acceptor) is an active-site residue. An NADP(+)-binding site is contributed by Asp-82. Shikimate contacts are provided by Asn-91 and Asp-106. NADP(+) is bound by residues 130 to 134 (GSGGS) and Ile-226. Tyr-228 serves as a coordination point for shikimate. Gly-249 serves as a coordination point for NADP(+).

Belongs to the shikimate dehydrogenase family. In terms of assembly, homodimer.

It catalyses the reaction shikimate + NADP(+) = 3-dehydroshikimate + NADPH + H(+). The protein operates within metabolic intermediate biosynthesis; chorismate biosynthesis; chorismate from D-erythrose 4-phosphate and phosphoenolpyruvate: step 4/7. Its function is as follows. Involved in the biosynthesis of the chorismate, which leads to the biosynthesis of aromatic amino acids. Catalyzes the reversible NADPH linked reduction of 3-dehydroshikimate (DHSA) to yield shikimate (SA). This Methanococcus vannielii (strain ATCC 35089 / DSM 1224 / JCM 13029 / OCM 148 / SB) protein is Shikimate dehydrogenase (NADP(+)).